Reading from the N-terminus, the 528-residue chain is NAC domain-containing protein 13 (528 aa).

The 151-residue stretch at 10–160 (LAPGFRFHPT…AYVLYKIYKK (151 aa)) folds into the NAC domain. Residues 107–166 (VGEKKTLVFHRGRAPNGERTNWVMHEYTLHKEELKRCGGEDVKDAYVLYKIYKKSGSGPK) mediate DNA binding. Positions 388–419 (EAPGTGDSSEFLNPVPSGISTTNEDDPSKDES) are disordered. The helical transmembrane segment at 499 to 519 (FFCLSIIGALCALFWVIIGTM) threads the bilayer.

As to quaternary structure, interacts with RCD1. In terms of tissue distribution, expressed in roots, rosette leaves, shoot apex, stems and flowers.

The protein resides in the endoplasmic reticulum membrane. The protein localises to the nucleus. Its function is as follows. Transcriptional activator activated by proteolytic cleavage through regulated intramembrane proteolysis (RIP). Involved in oxidative stress tolerance by mediating regulation of mitochondrial retrograde signaling during mitochondrial dysfunction. Interacts directly with the mitochondrial dysfunction DNA consensus motif 5'-CTTGNNNNNCA[AC]G-3', a cis-regulatory elements of several mitochondrial retrograde regulation-induced genes, and triggers increased oxidative stress tolerance. This Arabidopsis thaliana (Mouse-ear cress) protein is NAC domain-containing protein 13.